The following is a 188-amino-acid chain: Inosine triphosphate pyrophosphatase (188 aa).

An ITP-binding site is contributed by 7 to 12 (TGNAGK). Glu36 contacts Mg(2+). ITP-binding positions include Lys48, 64–65 (DT), Lys81, 140–143 (FGWN), Lys163, and 168–169 (HR).

It belongs to the HAM1 NTPase family. As to quaternary structure, homodimer. Mg(2+) is required as a cofactor. Mn(2+) serves as cofactor.

It localises to the cytoplasm. Its subcellular location is the nucleus. It catalyses the reaction ITP + H2O = IMP + diphosphate + H(+). The catalysed reaction is dITP + H2O = dIMP + diphosphate + H(+). The enzyme catalyses XTP + H2O = XMP + diphosphate + H(+). In terms of biological role, pyrophosphatase that hydrolyzes non-canonical purine nucleotides such as inosine triphosphate (ITP), deoxyinosine triphosphate (dITP) or xanthosine 5'-triphosphate (XTP) to their respective monophosphate derivatives. The enzyme does not distinguish between the deoxy- and ribose forms. Probably excludes non-canonical purines from RNA and DNA precursor pools, thus preventing their incorporation into RNA and DNA and avoiding chromosomal lesions. The protein is Inosine triphosphate pyrophosphatase of Yarrowia lipolytica (strain CLIB 122 / E 150) (Yeast).